We begin with the raw amino-acid sequence, 498 residues long: UDP-N-acetylmuramate--L-alanine ligase (498 aa).

133-139 (GSSGKTT) is an ATP binding site.

The protein belongs to the MurCDEF family.

It localises to the cytoplasm. It carries out the reaction UDP-N-acetyl-alpha-D-muramate + L-alanine + ATP = UDP-N-acetyl-alpha-D-muramoyl-L-alanine + ADP + phosphate + H(+). It participates in cell wall biogenesis; peptidoglycan biosynthesis. Cell wall formation. The chain is UDP-N-acetylmuramate--L-alanine ligase from Wolbachia pipientis wMel.